The chain runs to 122 residues: uncharacterized protein (122 aa).

Positions 1-22 (MNMMRIFYIGLSGVGMMFSSMA) are cleaved as a signal peptide.

This is an uncharacterized protein from Escherichia coli (strain K12).